We begin with the raw amino-acid sequence, 404 residues long: Cysteine desulfurase IscS (404 aa).

Residues 75 to 76 (AT), asparagine 155, glutamine 183, and 203 to 205 (SAH) each bind pyridoxal 5'-phosphate. Position 206 is an N6-(pyridoxal phosphate)lysine (lysine 206). Threonine 243 provides a ligand contact to pyridoxal 5'-phosphate. Cysteine 328 functions as the Cysteine persulfide intermediate in the catalytic mechanism. Residue cysteine 328 participates in [2Fe-2S] cluster binding.

Belongs to the class-V pyridoxal-phosphate-dependent aminotransferase family. NifS/IscS subfamily. As to quaternary structure, homodimer. Forms a heterotetramer with IscU, interacts with other sulfur acceptors. Pyridoxal 5'-phosphate serves as cofactor.

It localises to the cytoplasm. The catalysed reaction is (sulfur carrier)-H + L-cysteine = (sulfur carrier)-SH + L-alanine. It participates in cofactor biosynthesis; iron-sulfur cluster biosynthesis. Its function is as follows. Master enzyme that delivers sulfur to a number of partners involved in Fe-S cluster assembly, tRNA modification or cofactor biosynthesis. Catalyzes the removal of elemental sulfur atoms from cysteine to produce alanine. Functions as a sulfur delivery protein for Fe-S cluster synthesis onto IscU, an Fe-S scaffold assembly protein, as well as other S acceptor proteins. This is Cysteine desulfurase IscS from Vibrio atlanticus (strain LGP32) (Vibrio splendidus (strain Mel32)).